We begin with the raw amino-acid sequence, 812 residues long: Collagen-like protein 5 (812 aa).

N-linked (GlcNAc...) asparagine; by host glycosylation is found at N13 and N83. 3 Collagen-like domains span residues 69–128, 143–502, and 506–565; these read GASG…KGDD, GEKG…KGDN, and GETG…KGEA. Positions 71–568 are disordered; sequence SGAQGVKGDP…PGIKGEAGTN (498 aa). 4 stretches are compositionally biased toward basic and acidic residues: residues 88–112, 121–435, 444–523, and 531–561; these read TKGE…EKGD, SKGD…ETGS, SKGD…KGIK, and VKGD…DPGI. The N-linked (GlcNAc...) asparagine; by host glycan is linked to N502. Residues N637, N658, and N667 are each glycosylated (N-linked (GlcNAc...) asparagine; by host). Residues 730 to 802 form a disordered region; the sequence is GQARTNGAST…VSASGGRGGD (73 aa). Gly residues predominate over residues 752–765; sequence FGGGGGGASGFAKG.

Post-translationally, may be hydroxylated on lysine by the viral-encoded procollagen-lysine,2-oxoglutarate 5-dioxygenase.

It localises to the virion. Functionally, may participate in the formation of a layer of cross-linked glycosylated fibrils at the viral surface thus giving it a hairy-like appearance. The protein is Collagen-like protein 5 of Acanthamoeba polyphaga (Amoeba).